The chain runs to 257 residues: MTNRSQDKHILVNRDALIDGTIVSVLVTGSAITLYKGYTCYLKQLTNASQIPTKVFRRKWLYGKVTSVGDGDNFHFFHMPGGVLGGWGWIRAVPKLTKNEKKTASLSFHWGTNKLKQQNATYKNKRNLPTISVRACGIDAPECAHFGNPAQPYSEDALIWLRHRILGKKLWIKPLKTDQYGRCVASIRIWTWLGYSDICLEMIKEGLAVVYEGKTGAEFDGREGKYRRHEFIARAKKKGLWSQKRLQTPGEYKKRYQ.

The helical transmembrane segment at 17–34 (LIDGTIVSVLVTGSAITL) threads the bilayer. One can recognise a TNase-like domain in the interval 59–243 (KWLYGKVTSV…RAKKKGLWSQ (185 aa)). Residue R134 is part of the active site. D139 serves as a coordination point for Ca(2+). Catalysis depends on residues E142 and R182.

This sequence belongs to the LCL3 family.

It localises to the mitochondrion. Its subcellular location is the membrane. The sequence is that of Probable endonuclease LCL3 (LCL3) from Candida glabrata (strain ATCC 2001 / BCRC 20586 / JCM 3761 / NBRC 0622 / NRRL Y-65 / CBS 138) (Yeast).